The following is a 501-amino-acid chain: Solute carrier family 2, facilitated glucose transporter member 5 (501 aa).

Methionine 1 carries the post-translational modification N-acetylmethionine. Topologically, residues 1 to 17 are cytoplasmic; the sequence is MEEKHQEETGELTLVLA. Residues 18–38 form a helical membrane-spanning segment; that stretch reads LATLIAAFGSSFQYGYNVAAV. Residue tyrosine 31 participates in D-fructose binding. Over 39 to 67 the chain is Extracellular; the sequence is NSPSEFMQQFYNDTYYDRNEENIESFTLT. Residue asparagine 50 is glycosylated (N-linked (GlcNAc...) asparagine). The chain crosses the membrane as a helical span at residues 68-90; it reads LLWSLTVSMFPFGGFIGSLMVGT. The Cytoplasmic segment spans residues 91–97; the sequence is LVNKLGR. A helical transmembrane segment spans residues 98–118; the sequence is KGALLFNNIFSILPAILMGCS. Over 119 to 125 the chain is Extracellular; that stretch reads QIAQSFE. The helical transmembrane segment at 126 to 148 threads the bilayer; sequence LIIISRLLVGICAGISSNVVPMY. Residues 149–160 are Cytoplasmic-facing; the sequence is LGELAPKNLRGA. The helical transmembrane segment at 161–181 threads the bilayer; the sequence is LGVVPQLFITVGILVAQLFGL. Glutamine 166 is a D-fructose binding site. At 182-191 the chain is on the extracellular side; the sequence is RSLLANEDGW. The helical transmembrane segment at 192–212 threads the bilayer; that stretch reads PVLLGLTGVPAGLQLLLLPFF. Residues 213-276 lie on the Cytoplasmic side of the membrane; it reads PESPRYLLIQ…LFTMQSLRWQ (64 aa). Residues 277–297 traverse the membrane as a helical segment; that stretch reads LISMIVLMAGQQLSGVNAIYY. Residues glutamine 287 and 295-297 each bind D-fructose; that span reads IYY. The Extracellular segment spans residues 298 to 312; sequence YADQIYLSAGVKSDD. Residues 313–333 traverse the membrane as a helical segment; it reads VQYVTAGTGAVNVFMTILTIF. At 334-341 the chain is on the cytoplasmic side; it reads VVELWGRR. The helical transmembrane segment at 342-362 threads the bilayer; that stretch reads FLLLVGFSTCLIACLVLTAAL. Residues 363-370 lie on the Extracellular side of the membrane; sequence ALQNTISW. The helical transmembrane segment at 371 to 393 threads the bilayer; the sequence is MPYISIVCVIVYVIGHALGPSPI. Position 386 (histidine 386) interacts with D-fructose. The Cytoplasmic segment spans residues 394–411; sequence PALLITEIFLQSSRPAAY. The chain crosses the membrane as a helical span at residues 412–432; sequence MIGGSVHWLSNFTVGLIFPFI. 418–419 provides a ligand contact to D-fructose; that stretch reads HW. Over 433-438 the chain is Extracellular; sequence QMGLGP. The helical transmembrane segment at 439 to 459 threads the bilayer; sequence YSFIIFATICFLTTIYIFMVV. The Cytoplasmic segment spans residues 460 to 501; it reads PETKGRTFIEINQIFTMKNKVSDVYPKKEEELGALPHAILEQ.

It belongs to the major facilitator superfamily. Sugar transporter (TC 2.A.1.1) family. Glucose transporter subfamily. Detected at the apical membrane of villi in the jejunum. Detected in jejunum mucosa. Detected in epididymis and whole testis (at protein level). Detected in small intestine, kidney and testis. Detected in cochlea, but not in inner or outer cochlear hair cells.

The protein resides in the apical cell membrane. It localises to the cell membrane. The protein localises to the sarcolemma. It carries out the reaction D-fructose(out) = D-fructose(in). Its activity is regulated as follows. Fructose uptake is inhibited by cytochalasin B. Functions as a fructose transporter that has only low activity with other monosaccharides. Can mediate the uptake of deoxyglucose, but with low efficiency. Essential for fructose uptake in the small intestine. Plays a role in the regulation of salt uptake and blood pressure in response to dietary fructose. Required for the development of high blood pressure in response to high dietary fructose intake. This Mus musculus (Mouse) protein is Solute carrier family 2, facilitated glucose transporter member 5.